The following is a 133-amino-acid chain: Small ribosomal subunit protein uS8 (133 aa).

Belongs to the universal ribosomal protein uS8 family. Part of the 30S ribosomal subunit. Contacts proteins S5 and S12.

In terms of biological role, one of the primary rRNA binding proteins, it binds directly to 16S rRNA central domain where it helps coordinate assembly of the platform of the 30S subunit. This Chlamydia caviae (strain ATCC VR-813 / DSM 19441 / 03DC25 / GPIC) (Chlamydophila caviae) protein is Small ribosomal subunit protein uS8.